Here is a 587-residue protein sequence, read N- to C-terminus: MVTAAMLLQRCPVLIRSPTGLLGKMIKTHQFLFGIGRCPILATQGPSFSQIHLKATKAGGDSPSWAKSHCPFMLLELQDGKSKIVQKAAPEVQEDVKTFKTDLPTSLASTSLKKTFSSPQEPEKNSEKVTHLIQNNMAGDHVFGYDQFFRDKIMEKKQDHTYRVFKTVNRWADAYPFAEHFFEASVASKDVSVWCSNDYLGMSRHPRVLQATQEILQRHGAGAGGTRNISGTSKFHVELEQELAELHQKDSALLFSSCFVANDSTLFTLAKILPGCEIYSDAGNHASMIQGIRNSGAAKFVFRHNDPDHLKKLLKKSNPETPKIVAFETVHSMDGAICPLEELCDVAHQYGALTFVDEVHAVGLYGSRGAGIGERDGIMHKIDIISGTLGKAFGCVGGYIASTRDLVDMVRSYAAGFIFTTSLPPMVLSGALESVRLLKGEEGQALRRAHQRNVKHMRQLLMDRGLPVIPCPSHIIPIRVGDAMLNTRICDLLLSKYGIYVQAINYPTVPRGEELLRLAPSPHHSPQMMEDFVEKLLEAWTEVGLPLQDISIAACNFCRRPVHFELMSEWERSYFGNMGPQYVTTYA.

The N-terminal 49 residues, Met1–Ser49, are a transit peptide targeting the mitochondrion. Residue Arg163 coordinates succinyl-CoA. Residues Cys258 and Phe259 each coordinate pyridoxal 5'-phosphate. Residues Ser280 and Lys299 each contribute to the succinyl-CoA site. Pyridoxal 5'-phosphate-binding residues include Ser332, His360, and Thr388. Residue Lys391 is part of the active site. Lys391 carries the N6-(pyridoxal phosphate)lysine modification. Pyridoxal 5'-phosphate-binding residues include Thr420 and Thr421. Thr508 contributes to the succinyl-CoA binding site.

This sequence belongs to the class-II pyridoxal-phosphate-dependent aminotransferase family. In terms of assembly, homodimer. Interacts with SUCLA2. It depends on pyridoxal 5'-phosphate as a cofactor.

It is found in the mitochondrion inner membrane. The catalysed reaction is succinyl-CoA + glycine + H(+) = 5-aminolevulinate + CO2 + CoA. Its pathway is porphyrin-containing compound metabolism; protoporphyrin-IX biosynthesis; 5-aminolevulinate from glycine: step 1/1. In terms of biological role, catalyzes the pyridoxal 5'-phosphate (PLP)-dependent condensation of succinyl-CoA and glycine to form aminolevulinic acid (ALA), with CoA and CO2 as by-products. Contributes significantly to heme formation during erythropoiesis. The chain is 5-aminolevulinate synthase, erythroid-specific, mitochondrial (ALAS2) from Bos taurus (Bovine).